Consider the following 506-residue polypeptide: Histidine ammonia-lyase (506 aa).

The 5-imidazolinone (Ala-Gly) cross-link spans 143–145 (ASG). Ser144 is modified (2,3-didehydroalanine (Ser)).

Belongs to the PAL/histidase family. In terms of processing, contains an active site 4-methylidene-imidazol-5-one (MIO), which is formed autocatalytically by cyclization and dehydration of residues Ala-Ser-Gly.

The protein resides in the cytoplasm. The catalysed reaction is L-histidine = trans-urocanate + NH4(+). It functions in the pathway amino-acid degradation; L-histidine degradation into L-glutamate; N-formimidoyl-L-glutamate from L-histidine: step 1/3. This Salmonella typhimurium (strain LT2 / SGSC1412 / ATCC 700720) protein is Histidine ammonia-lyase.